A 329-amino-acid polypeptide reads, in one-letter code: Interferon regulatory factor 1 (329 aa).

Residues 5 to 113 constitute a DNA-binding region (IRF tryptophan pentad repeat); it reads RMRMRPWLEM…SAVRVYRMLP (109 aa). At Lys-78 the chain carries N6-acetyllysine. A disordered region spans residues 93–166; the sequence is EVKDQSRNKG…LPDDHSSYTT (74 aa). Over residues 146–166 the composition is skewed to polar residues; that stretch reads DTFSDGLSSSTLPDDHSSYTT. Glycyl lysine isopeptide (Lys-Gly) (interchain with G-Cter in SUMO) cross-links involve residues Lys-276 and Lys-300.

It belongs to the IRF family. Monomer. Homodimer. Interacts with EP300. Interacts with MYD88. Interacts with PIAS3. Interacts with SPOP. Post-translationally, phosphorylated by CK2 and this positively regulates its activity. Ubiquitinated in a SPOP-depedent manner. Sumoylation represses the transcriptional activity and displays enhanced resistance to protein degradation. Sumoylated by UBE2I/UBC9 and SUMO1. Inactivates the tumor suppressor activity. Elevated levels in tumor cells. Major site is Lys-276. Sumoylation is enhanced by PIAS3. Desumoylated by SENP1 in tumor cells and appears to compete with ubiquitination on C-terminal sites. In terms of processing, ubiquitinated. Appears to compete with sumoylation on C-terminal sites.

The protein resides in the nucleus. It is found in the cytoplasm. Its activity is regulated as follows. Activated by MYD88. In terms of biological role, transcriptional regulator which displays a remarkable functional diversity in the regulation of cellular responses. Regulates transcription of IFN and IFN-inducible genes, host response to viral and bacterial infections, regulation of many genes expressed during hematopoiesis, inflammation, immune responses and cell proliferation and differentiation, regulation of the cell cycle and induction of growth arrest and programmed cell death following DNA damage. Stimulates both innate and acquired immune responses through the activation of specific target genes and can act as a transcriptional activator and repressor regulating target genes by binding to an interferon-stimulated response element (ISRE) in their promoters. Has an essentail role in IFNG-dependent immunity to mycobacteria. Binds to a consensus sequence in gene promoters. Its target genes for transcriptional activation activity are: genes involved in anti-viral response, such as IFN-alpha/beta, RIGI, TNFSF10/TRAIL, ZBP1, OAS1/2, PIAS1/GBP, EIF2AK2/PKR and RSAD2/viperin; antibacterial response, such as GBP2, GBP5, IRGB10 and NOS2/INOS; anti-proliferative response, such as p53/TP53, LOX and CDKN1A; apoptosis, such as BBC3/PUMA, CASP1, CASP7 and CASP8; immune response, such as IL7, IL12A/B and IL15, PTGS2/COX2 and CYBB; DNA damage responses and DNA repair, such as POLQ/POLH; MHC class I expression, such as TAP1, PSMB9/LMP2, PSME1/PA28A, PSME2/PA28B and B2M and MHC class II expression, such as CIITA; metabolic enzymes, such as ACOD1/IRG1. Represses genes involved in anti-proliferative response, such as BIRC5/survivin, CCNB1, CCNE1, CDK1, CDK2 and CDK4 and in immune response, such as FOXP3, IL4, ANXA2 and TLR4. Stimulates p53/TP53-dependent transcription through enhanced recruitment of EP300 leading to increased acetylation of p53/TP53. Plays an important role in immune response directly affecting NK maturation and activity, macrophage production of IL12, Th1 development and maturation of CD8+ T-cells. Also implicated in the differentiation and maturation of dendritic cells and in the suppression of regulatory T (Treg) cells development. Acts as a tumor suppressor and plays a role not only in antagonism of tumor cell growth but also in stimulating an immune response against tumor cells. This Mus musculus (Mouse) protein is Interferon regulatory factor 1 (Irf1).